Here is a 327-residue protein sequence, read N- to C-terminus: Phenylalanine--tRNA ligase alpha subunit (327 aa).

Residue glutamate 253 coordinates Mg(2+).

Belongs to the class-II aminoacyl-tRNA synthetase family. Phe-tRNA synthetase alpha subunit type 1 subfamily. Tetramer of two alpha and two beta subunits. The cofactor is Mg(2+).

It is found in the cytoplasm. The enzyme catalyses tRNA(Phe) + L-phenylalanine + ATP = L-phenylalanyl-tRNA(Phe) + AMP + diphosphate + H(+). This Laribacter hongkongensis (strain HLHK9) protein is Phenylalanine--tRNA ligase alpha subunit.